A 273-amino-acid polypeptide reads, in one-letter code: Putative pyruvate, phosphate dikinase regulatory protein (273 aa).

153-160 (GISRTSKT) provides a ligand contact to ADP.

It belongs to the pyruvate, phosphate/water dikinase regulatory protein family. PDRP subfamily.

It catalyses the reaction N(tele)-phospho-L-histidyl/L-threonyl-[pyruvate, phosphate dikinase] + ADP = N(tele)-phospho-L-histidyl/O-phospho-L-threonyl-[pyruvate, phosphate dikinase] + AMP + H(+). The enzyme catalyses N(tele)-phospho-L-histidyl/O-phospho-L-threonyl-[pyruvate, phosphate dikinase] + phosphate + H(+) = N(tele)-phospho-L-histidyl/L-threonyl-[pyruvate, phosphate dikinase] + diphosphate. In terms of biological role, bifunctional serine/threonine kinase and phosphorylase involved in the regulation of the pyruvate, phosphate dikinase (PPDK) by catalyzing its phosphorylation/dephosphorylation. This chain is Putative pyruvate, phosphate dikinase regulatory protein, found in Rhizobium leguminosarum bv. trifolii (strain WSM2304).